A 367-amino-acid chain; its full sequence is NAD(P)H-quinone oxidoreductase subunit 1, chloroplastic (367 aa).

7 helical membrane passes run 30–50 (LFPI…IVWL), 98–118 (FSIG…VIPF), 127–147 (LSIG…GLLM), 164–184 (AAAQ…SISL), 273–293 (LFVT…IFVP), 304–324 (VFGT…FLFI), and 340–360 (LLNL…LLTT).

It belongs to the complex I subunit 1 family. As to quaternary structure, NDH is composed of at least 16 different subunits, 5 of which are encoded in the nucleus.

The protein localises to the plastid. It is found in the chloroplast thylakoid membrane. It carries out the reaction a plastoquinone + NADH + (n+1) H(+)(in) = a plastoquinol + NAD(+) + n H(+)(out). The catalysed reaction is a plastoquinone + NADPH + (n+1) H(+)(in) = a plastoquinol + NADP(+) + n H(+)(out). Functionally, NDH shuttles electrons from NAD(P)H:plastoquinone, via FMN and iron-sulfur (Fe-S) centers, to quinones in the photosynthetic chain and possibly in a chloroplast respiratory chain. The immediate electron acceptor for the enzyme in this species is believed to be plastoquinone. Couples the redox reaction to proton translocation, and thus conserves the redox energy in a proton gradient. The polypeptide is NAD(P)H-quinone oxidoreductase subunit 1, chloroplastic (Nicotiana tabacum (Common tobacco)).